The chain runs to 274 residues: Adenosylcobinamide-GDP ribazoletransferase (274 aa).

7 helical membrane passes run 46–66 (VMAS…AIAF), 69–89 (TSLG…WELF), 117–137 (IIAD…SILI), 151–173 (WWMV…HSRL), 192–212 (HTII…PLAM), 216–236 (ELIT…LVEI), and 253–273 (FIMH…VGIV).

The protein belongs to the CobS family. The cofactor is Mg(2+).

It localises to the cell membrane. The enzyme catalyses alpha-ribazole + adenosylcob(III)inamide-GDP = adenosylcob(III)alamin + GMP + H(+). It carries out the reaction alpha-ribazole 5'-phosphate + adenosylcob(III)inamide-GDP = adenosylcob(III)alamin 5'-phosphate + GMP + H(+). It participates in cofactor biosynthesis; adenosylcobalamin biosynthesis; adenosylcobalamin from cob(II)yrinate a,c-diamide: step 7/7. Functionally, joins adenosylcobinamide-GDP and alpha-ribazole to generate adenosylcobalamin (Ado-cobalamin). Also synthesizes adenosylcobalamin 5'-phosphate from adenosylcobinamide-GDP and alpha-ribazole 5'-phosphate. The polypeptide is Adenosylcobinamide-GDP ribazoletransferase (Corynebacterium diphtheriae (strain ATCC 700971 / NCTC 13129 / Biotype gravis)).